Reading from the N-terminus, the 163-residue chain is 3-hydroxyacyl-[acyl-carrier-protein] dehydratase FabZ (163 aa).

Residue His58 is part of the active site.

Belongs to the thioester dehydratase family. FabZ subfamily.

The protein resides in the cytoplasm. It catalyses the reaction a (3R)-hydroxyacyl-[ACP] = a (2E)-enoyl-[ACP] + H2O. In terms of biological role, involved in unsaturated fatty acids biosynthesis. Catalyzes the dehydration of short chain beta-hydroxyacyl-ACPs and long chain saturated and unsaturated beta-hydroxyacyl-ACPs. This chain is 3-hydroxyacyl-[acyl-carrier-protein] dehydratase FabZ, found in Francisella philomiragia subsp. philomiragia (strain ATCC 25017 / CCUG 19701 / FSC 153 / O#319-036).